The chain runs to 435 residues: GTPase Obg (435 aa).

Residues M1–L158 enclose the Obg domain. In terms of domain architecture, OBG-type G spans A159 to A336. GTP-binding positions include G165–S172, F190–V194, D212–G215, N282–D285, and S317–L319. Mg(2+) contacts are provided by S172 and T192. An OCT domain is found at G357–D435.

This sequence belongs to the TRAFAC class OBG-HflX-like GTPase superfamily. OBG GTPase family. As to quaternary structure, monomer. Mg(2+) is required as a cofactor.

It localises to the cytoplasm. An essential GTPase which binds GTP, GDP and possibly (p)ppGpp with moderate affinity, with high nucleotide exchange rates and a fairly low GTP hydrolysis rate. Plays a role in control of the cell cycle, stress response, ribosome biogenesis and in those bacteria that undergo differentiation, in morphogenesis control. This Streptococcus equi subsp. zooepidemicus (strain MGCS10565) protein is GTPase Obg.